Reading from the N-terminus, the 423-residue chain is Glycine amidinotransferase, mitochondrial (423 aa).

The N-terminal 43 residues, 1 to 43, are a transit peptide targeting the mitochondrion; the sequence is MLRVRCLRGGSRGAEAVHYIGSRLGGSLTGWVQRTFQSTQAAT. 2 positions are modified to phosphoserine: serine 46 and serine 49. Aspartate 170 lines the arginine pocket. Residues aspartate 254 and histidine 303 contribute to the active site. Aspartate 305, arginine 322, serine 354, and serine 355 together coordinate arginine. Lysine 385 is modified (N6-acetyllysine). The Amidino-cysteine intermediate role is filled by cysteine 407.

This sequence belongs to the amidinotransferase family. Homodimer. In terms of tissue distribution, highly expressed in the kidney and pancreas, especially in the proximal tubules of the kidney, and alpha cells of the pancreatic islets (at protein level). Moderately expressed in liver hepatocytes (at protein level). Expressed in the kidney, pancreas, liver, colon, ileum, jejunum, heart and skeletal muscle. In reproductive tissues, expressed in the testis, epididymis, ovary, oviduct and uterus. Expressed throughout the brain in neurons, astrocytes and oligodendrocytes. In 12.5 dpc embryos, it is expressed in the middle part of the somites, hepatic primordium and wall of the dorsal aorta. Expressed in 15.5 dpc embryos in isolated cells throughout the central nervous system, skeletal muscles, gonad primordia, caudal somites, liver and pancreas, but not in the choroid plexus, root ganglia or kidney. Expressed in skeletal muscle, kidney, pancreas, central nervous system, liver and intestine epithelial cells, but not in epidermis, dermis, olfactory epithelium, trachea, lung, stomach or heart in 18.5 dpc embryos.

The protein resides in the mitochondrion inner membrane. It carries out the reaction L-arginine + glycine = guanidinoacetate + L-ornithine. The enzyme catalyses 4-aminobutanoate + L-arginine = 4-guanidinobutanoate + L-ornithine. It catalyses the reaction beta-alanine + L-arginine = 3-guanidinopropanoate + L-ornithine. The catalysed reaction is taurine + L-arginine = taurocyamine + L-ornithine. The protein operates within amine and polyamine biosynthesis; creatine biosynthesis; creatine from L-arginine and glycine: step 1/2. In terms of biological role, transamidinase that catalyzes the transfer of the amidino group of L-arginine onto the amino moiety of acceptor metabolites such as glycine, beta-alanine, gamma-aminobutyric acid (GABA) and taurine yielding the corresponding guanidine derivatives. Catalyzes the rate-limiting step of creatine biosynthesis, namely the transfer of the amidino group from L-arginine to glycine to generate guanidinoacetate, which is then methylated by GAMT to form creatine. Provides creatine as a source for ATP generation in tissues with high energy demands, in particular skeletal muscle, heart and brain. The protein is Glycine amidinotransferase, mitochondrial (Gatm) of Rattus norvegicus (Rat).